The following is an 85-amino-acid chain: U4-theraphotoxin-Hhn1p (85 aa).

Residues 1–22 form the signal peptide; it reads MKMTLIAIPTCAAVLVLHTTAA. Residues 23-48 constitute a propeptide that is removed on maturation; sequence EELEAESQLMEVGMPDTELEAVDGER. Intrachain disulfides connect C52–C66, C56–C77, and C71–C82.

It belongs to the neurotoxin 12 (Hwtx-2) family. 02 (Hwtx-2) subfamily. As to expression, expressed by the venom gland.

The protein resides in the secreted. In terms of biological role, postsynaptic neurotoxin. This is U4-theraphotoxin-Hhn1p from Cyriopagopus hainanus (Chinese bird spider).